Consider the following 387-residue polypeptide: BarH-like 2 homeobox protein (387 aa).

Disordered stretches follow at residues 1-145 (MTME…FLIK), 157-240 (CAPY…TAFS), and 367-387 (PGGQPALNPLSSPIPGTPHPR). The span at 7–24 (SGSSFGIDTILSSASSGS) shows a compositional bias: polar residues. Over residues 100–113 (APTQSLQPLPQQQQ) the composition is skewed to low complexity. The span at 114-126 (PLPPQQPPPPPPQ) shows a compositional bias: pro residues. A compositionally biased stretch (low complexity) spans 127–141 (QLGSAASAPRTSTSS). A compositionally biased stretch (polar residues) spans 160-178 (YSTSVSSPHHTPKQESNAV). The span at 180–220 (ESFRPKLEQEDSKTKLDKREDSQSDIKCHGTKEEGDREITS) shows a compositional bias: basic and acidic residues. Residues 232–291 (PRKARTAFSDHQLNQLERSFERQKYLSVQDRMDLAAALNLTDTQVKTWYQNRRTKWKRQT) constitute a DNA-binding region (homeobox).

The protein belongs to the BAR homeobox family.

It is found in the nucleus. Potential regulator of neural basic helix-loop-helix genes. This chain is BarH-like 2 homeobox protein (BARHL2), found in Homo sapiens (Human).